An 81-amino-acid chain; its full sequence is Putative defensin-like protein 52 (81 aa).

A signal peptide spans 1–20; that stretch reads MTFFLVIILAISSSNYNVLA. 2 disulfides stabilise this stretch: Cys-31–Cys-55 and Cys-41–Cys-64.

This sequence belongs to the DEFL family.

The protein localises to the secreted. This is Putative defensin-like protein 52 from Arabidopsis thaliana (Mouse-ear cress).